The sequence spans 483 residues: Phloretin 2'-O-glucosyltransferase (483 aa).

His15 acts as the Proton acceptor in catalysis. His15 is a binding site for an anthocyanidin. Residue Asp118 is the Charge relay of the active site. 8 residues coordinate UDP-alpha-D-glucose: Thr140, Ala360, Gln362, His377, Trp380, Asn381, Ser382, and Glu385. Ala400 contacts an anthocyanidin. Residues Glu401 and Gln402 each coordinate UDP-alpha-D-glucose.

This sequence belongs to the UDP-glycosyltransferase family.

It carries out the reaction phloretin + UDP-alpha-D-glucose = phlorizin + UDP + H(+). Its function is as follows. Glycosyltransferase that possesses phloretin 2'-O-glycosyltransferase activity. Converts phloretin to phlorizin (phloretin 2'-O-glucoside), a potent antioxidant. Is specific for phloretin and does not possess glycosyltransferase activity toward caffeic acid, catechin, chlorogenic acid, 2-coumaric acid, 3-coumaric acid, 4-coumaric acid, cyanidin, 3,4-dihydroxyhydrocinnamic acid, epicatechin, 3-hydroxybenzoic acid, naringenin, 3,4-dihydroxybenzoic acid, quercetin and rutin. Can glycosylate phloretin in the presence of UDP-glucose, UDP-xylose and UDP-galactose. This chain is Phloretin 2'-O-glucosyltransferase, found in Malus domestica (Apple).